Here is a 43-residue protein sequence, read N- to C-terminus: Metallothionein B (43 aa).

Residues 1–16 (SCAGSCKCKNCRCRSC) form a beta region. Residues Cys-2, Cys-6, Cys-8, Cys-11, Cys-13, Cys-16, Cys-20, Cys-21, Cys-23, Cys-24, Cys-28, Cys-31, Cys-35, and Cys-37 each coordinate a divalent metal cation. The alpha stretch occupies residues 17–43 (RKSCCSCCPAGCNNCVKGCVCKEPASS).

This sequence belongs to the metallothionein superfamily. Type 1 family.

Functionally, metallothioneins have a high content of cysteine residues that bind various heavy metals. This Colinus virginianus (Northern bobwhite) protein is Metallothionein B.